A 289-amino-acid polypeptide reads, in one-letter code: Diaminopimelate epimerase (289 aa).

Residues Asn-13, Gln-52, and Asn-72 each contribute to the substrate site. The Proton donor role is filled by Cys-81. Substrate contacts are provided by residues 82–83 (GN), Asn-167, Asn-201, and 219–220 (ER). Cys-228 serves as the catalytic Proton acceptor. Residue 229–230 (GT) coordinates substrate.

It belongs to the diaminopimelate epimerase family. As to quaternary structure, homodimer.

It localises to the cytoplasm. It carries out the reaction (2S,6S)-2,6-diaminopimelate = meso-2,6-diaminopimelate. The protein operates within amino-acid biosynthesis; L-lysine biosynthesis via DAP pathway; DL-2,6-diaminopimelate from LL-2,6-diaminopimelate: step 1/1. In terms of biological role, catalyzes the stereoinversion of LL-2,6-diaminopimelate (L,L-DAP) to meso-diaminopimelate (meso-DAP), a precursor of L-lysine and an essential component of the bacterial peptidoglycan. The chain is Diaminopimelate epimerase from Caulobacter sp. (strain K31).